The sequence spans 462 residues: A-type ATP synthase subunit B (462 aa).

This sequence belongs to the ATPase alpha/beta chains family. In terms of assembly, has multiple subunits with at least A(3), B(3), C, D, E, F, H, I and proteolipid K(x).

Its subcellular location is the cell membrane. In terms of biological role, component of the A-type ATP synthase that produces ATP from ADP in the presence of a proton gradient across the membrane. The B chain is a regulatory subunit. The polypeptide is A-type ATP synthase subunit B (Methanococcus vannielii (strain ATCC 35089 / DSM 1224 / JCM 13029 / OCM 148 / SB)).